The chain runs to 276 residues: tRNA dimethylallyltransferase (276 aa).

Positions 9-12 are interaction with substrate tRNA; the sequence is DSLS.

The protein belongs to the IPP transferase family. In terms of assembly, monomer. Mg(2+) is required as a cofactor.

The catalysed reaction is adenosine(37) in tRNA + dimethylallyl diphosphate = N(6)-dimethylallyladenosine(37) in tRNA + diphosphate. Functionally, catalyzes the transfer of a dimethylallyl group onto the adenine at position 37 in tRNAs that read codons beginning with uridine, leading to the formation of N6-(dimethylallyl)adenosine (i(6)A). The protein is tRNA dimethylallyltransferase (miaA) of Helicobacter pylori (strain G27).